The primary structure comprises 244 residues: 7-cyano-7-deazaguanine synthase (244 aa).

14-24 provides a ligand contact to ATP; the sequence is FSGGQDSATCV. Zn(2+) contacts are provided by cysteine 202, cysteine 217, cysteine 220, and cysteine 223.

Belongs to the QueC family. Zn(2+) is required as a cofactor.

It carries out the reaction 7-carboxy-7-deazaguanine + NH4(+) + ATP = 7-cyano-7-deazaguanine + ADP + phosphate + H2O + H(+). It functions in the pathway purine metabolism; 7-cyano-7-deazaguanine biosynthesis. Its function is as follows. Catalyzes the ATP-dependent conversion of 7-carboxy-7-deazaguanine (CDG) to 7-cyano-7-deazaguanine (preQ(0)). The sequence is that of 7-cyano-7-deazaguanine synthase from Burkholderia cenocepacia (strain ATCC BAA-245 / DSM 16553 / LMG 16656 / NCTC 13227 / J2315 / CF5610) (Burkholderia cepacia (strain J2315)).